A 796-amino-acid chain; its full sequence is Nuclear GTPase SLIP-GC (796 aa).

A compositionally biased stretch (basic and acidic residues) spans 1–22; sequence MAETKDVFGQEPHPVEDDLYKE. The interval 1-35 is disordered; it reads MAETKDVFGQEPHPVEDDLYKERTRKRRKSDRDQR. 107–114 contacts GTP; it reads GSTGAGKS. 2 coiled-coil regions span residues 158 to 185 and 745 to 775; these read SDQE…EEAD and KELA…RLRK.

In terms of tissue distribution, expressed in germinal center B-cell and in lymphomas derived from germinal center B-cell.

Its subcellular location is the nucleus speckle. In terms of biological role, nuclear GTPase found in germinal center B-cells, where it may inhibit function of the activation-induced cytidine deaminase AICDA. Reduces somatic hypermutation in B-cells which may enhance genome stability. The protein is Nuclear GTPase SLIP-GC (NUGGC) of Homo sapiens (Human).